The sequence spans 277 residues: MVSAPPAEQLIEDAPLTIAGRQFRSRLMTGTGKYRSIADLQASVAASGCEIVTVAVRRVQTNAPGHEGLVDALDWSKLWLLPNTAGCQTAEEAIRVARLGREMAKLLGQEDNNFVKLEVIPDPKYLLPDPFGTLAAAEQLVKEGFAVLPYINADPLLAKRLEEVGCVTVMPLASPIGSGQGLRNAANIQIIIEQASVPVVVDAGIGTPSEAAAAMELGADALLINTAIAEAGNAPAMAKAMALATTAGRLAYLAGRIPVKAYASASSPLSGTITARS.

K116 (schiff-base intermediate with DXP) is an active-site residue. 1-deoxy-D-xylulose 5-phosphate is bound by residues G177, 203–204, and 225–226; these read AG and NT.

This sequence belongs to the ThiG family. As to quaternary structure, homotetramer. Forms heterodimers with either ThiH or ThiS.

The protein localises to the cytoplasm. The enzyme catalyses [ThiS sulfur-carrier protein]-C-terminal-Gly-aminoethanethioate + 2-iminoacetate + 1-deoxy-D-xylulose 5-phosphate = [ThiS sulfur-carrier protein]-C-terminal Gly-Gly + 2-[(2R,5Z)-2-carboxy-4-methylthiazol-5(2H)-ylidene]ethyl phosphate + 2 H2O + H(+). It participates in cofactor biosynthesis; thiamine diphosphate biosynthesis. Functionally, catalyzes the rearrangement of 1-deoxy-D-xylulose 5-phosphate (DXP) to produce the thiazole phosphate moiety of thiamine. Sulfur is provided by the thiocarboxylate moiety of the carrier protein ThiS. In vitro, sulfur can be provided by H(2)S. The chain is Thiazole synthase from Thermosynechococcus vestitus (strain NIES-2133 / IAM M-273 / BP-1).